A 436-amino-acid polypeptide reads, in one-letter code: Proteasome-activating nucleotidase (436 aa).

A coiled-coil region spans residues 7–98 (KDVRDLCEKF…LRSDLQRMKK (92 aa)). ATP-binding positions include 223-228 (GTGKTL) and histidine 362. A docks into pockets in the proteasome alpha-ring to cause gate opening region spans residues 434-436 (AYH).

It belongs to the AAA ATPase family. In terms of assembly, homohexamer. The hexameric complex has a two-ring architecture resembling a top hat that caps the 20S proteasome core at one or both ends. Upon ATP-binding, the C-terminus of PAN interacts with the alpha-rings of the proteasome core by binding to the intersubunit pockets.

It localises to the cytoplasm. Its function is as follows. ATPase which is responsible for recognizing, binding, unfolding and translocation of substrate proteins into the archaeal 20S proteasome core particle. Is essential for opening the gate of the 20S proteasome via an interaction with its C-terminus, thereby allowing substrate entry and access to the site of proteolysis. Thus, the C-termini of the proteasomal ATPase function like a 'key in a lock' to induce gate opening and therefore regulate proteolysis. Unfolding activity requires energy from ATP hydrolysis, whereas ATP binding alone promotes ATPase-20S proteasome association which triggers gate opening, and supports translocation of unfolded substrates. In Methanopyrus kandleri (strain AV19 / DSM 6324 / JCM 9639 / NBRC 100938), this protein is Proteasome-activating nucleotidase.